Consider the following 400-residue polypeptide: Exodeoxyribonuclease 7 large subunit (400 aa).

This sequence belongs to the XseA family. In terms of assembly, heterooligomer composed of large and small subunits.

It localises to the cytoplasm. It catalyses the reaction Exonucleolytic cleavage in either 5'- to 3'- or 3'- to 5'-direction to yield nucleoside 5'-phosphates.. Functionally, bidirectionally degrades single-stranded DNA into large acid-insoluble oligonucleotides, which are then degraded further into small acid-soluble oligonucleotides. In Clostridium perfringens (strain 13 / Type A), this protein is Exodeoxyribonuclease 7 large subunit.